The primary structure comprises 121 residues: Oxalate-binding protein (121 aa).

A Cupin type-2 domain is found at 49-117 (RMKLPPGSSV…GNTDLEFLAV (69 aa)). Positions 61, 63, and 68 each coordinate Mn(2+). Y70 serves as a coordination point for oxalate. Residue H102 participates in Mn(2+) binding.

As to quaternary structure, homodimer.

In terms of biological role, binds oxalate. The protein is Oxalate-binding protein of Thermotoga maritima (strain ATCC 43589 / DSM 3109 / JCM 10099 / NBRC 100826 / MSB8).